The following is a 684-amino-acid chain: Extracellular lipase (684 aa).

The first 48 residues, 1–48 (MKKKLIYAAVVSALLAGCGGSDDNKGDTSSYLDYLLTGSNAVGPSALA), serve as a signal peptide directing secretion. 2 disordered regions span residues 321–405 (SIPV…ADWG) and 462–493 (QRER…GDRS). Residues 385-405 (ADCRSDPPERAAGRGEQADWG) show a composition bias toward basic and acidic residues. S568 acts as the Nucleophile in catalysis.

It belongs to the AB hydrolase superfamily. Lipase family. As to quaternary structure, monomer.

It is found in the secreted. It catalyses the reaction a triacylglycerol + H2O = a diacylglycerol + a fatty acid + H(+). Functionally, the optimum chain lengths for the acyl moiety is C6 for ester hydrolysis and C6 and C8 for triacylglycerol hydrolysis. This chain is Extracellular lipase, found in Aeromonas hydrophila.